Reading from the N-terminus, the 135-residue chain is Ribonuclease P protein component 2 (135 aa).

This sequence belongs to the eukaryotic/archaeal RNase P protein component 2 family. Consists of a catalytic RNA component and at least 4-5 protein subunits.

It is found in the cytoplasm. The catalysed reaction is Endonucleolytic cleavage of RNA, removing 5'-extranucleotides from tRNA precursor.. In terms of biological role, part of ribonuclease P, a protein complex that generates mature tRNA molecules by cleaving their 5'-ends. This Methanosarcina barkeri (strain Fusaro / DSM 804) protein is Ribonuclease P protein component 2.